Consider the following 694-residue polypeptide: Putative ankyrin repeat protein RBE_0921 (694 aa).

10 ANK repeats span residues Leu-122–Val-151, Asn-155–Ser-185, Phe-216–Ala-245, Thr-249–Ala-275, Leu-279–Ala-317, Tyr-321–Lys-350, Asn-351–Asp-382, Asn-384–Lys-413, Gln-423–Ala-452, and Asp-456–Ile-485.

The protein is Putative ankyrin repeat protein RBE_0921 of Rickettsia bellii (strain RML369-C).